A 315-amino-acid polypeptide reads, in one-letter code: Ribose-phosphate pyrophosphokinase (315 aa).

Residues 37 to 39 (DGE) and 96 to 97 (RQ) contribute to the ATP site. Positions 131 and 171 each coordinate Mg(2+). Residue Lys-195 is part of the active site. D-ribose 5-phosphate-binding positions include Arg-197, Asp-221, and 225–229 (DTGGT).

Belongs to the ribose-phosphate pyrophosphokinase family. Class I subfamily. As to quaternary structure, homohexamer. Mg(2+) is required as a cofactor.

It localises to the cytoplasm. It catalyses the reaction D-ribose 5-phosphate + ATP = 5-phospho-alpha-D-ribose 1-diphosphate + AMP + H(+). Its pathway is metabolic intermediate biosynthesis; 5-phospho-alpha-D-ribose 1-diphosphate biosynthesis; 5-phospho-alpha-D-ribose 1-diphosphate from D-ribose 5-phosphate (route I): step 1/1. In terms of biological role, involved in the biosynthesis of the central metabolite phospho-alpha-D-ribosyl-1-pyrophosphate (PRPP) via the transfer of pyrophosphoryl group from ATP to 1-hydroxyl of ribose-5-phosphate (Rib-5-P). The chain is Ribose-phosphate pyrophosphokinase from Haemophilus influenzae (strain ATCC 51907 / DSM 11121 / KW20 / Rd).